A 132-amino-acid polypeptide reads, in one-letter code: MVRPLKPSQIRRLIRQTGVRKHRNSLRYKMRIKKGDTVQVISGDDKGKIGEVLQVFPERNMVLVEGVNIVTYHRKPQREGESGRIETKEAPIHACKVMLYSKKQEVASRIGYQITADGRKVRVLKKTGEILD.

Belongs to the universal ribosomal protein uL24 family. As to quaternary structure, part of the 50S ribosomal subunit.

Its function is as follows. One of two assembly initiator proteins, it binds directly to the 5'-end of the 23S rRNA, where it nucleates assembly of the 50S subunit. One of the proteins that surrounds the polypeptide exit tunnel on the outside of the subunit. The sequence is that of Large ribosomal subunit protein uL24 from Synechococcus sp. (strain JA-3-3Ab) (Cyanobacteria bacterium Yellowstone A-Prime).